Reading from the N-terminus, the 132-residue chain is Small ribosomal subunit protein uS13 (132 aa).

The segment at 106–132 (PVRGQVTQKNARTRKGPRKTVAGKKGK) is disordered. Positions 116–132 (ARTRKGPRKTVAGKKGK) are enriched in basic residues.

The protein belongs to the universal ribosomal protein uS13 family. As to quaternary structure, part of the 30S ribosomal subunit. Forms a loose heterodimer with protein S19. Forms two bridges to the 50S subunit in the 70S ribosome.

Functionally, located at the top of the head of the 30S subunit, it contacts several helices of the 16S rRNA. In the 70S ribosome it contacts the 23S rRNA (bridge B1a) and protein L5 of the 50S subunit (bridge B1b), connecting the 2 subunits; these bridges are implicated in subunit movement. Contacts the tRNAs in the A and P-sites. This is Small ribosomal subunit protein uS13 from Mycoplasmopsis pulmonis (strain UAB CTIP) (Mycoplasma pulmonis).